Here is a 406-residue protein sequence, read N- to C-terminus: 4-hydroxy-3-methylbut-2-en-1-yl diphosphate synthase (flavodoxin) (406 aa).

The [4Fe-4S] cluster site is built by C297, C300, C343, and E350.

This sequence belongs to the IspG family. As to quaternary structure, homodimer. [4Fe-4S] cluster is required as a cofactor.

The catalysed reaction is (2E)-4-hydroxy-3-methylbut-2-enyl diphosphate + oxidized [flavodoxin] + H2O + 2 H(+) = 2-C-methyl-D-erythritol 2,4-cyclic diphosphate + reduced [flavodoxin]. It functions in the pathway isoprenoid biosynthesis; isopentenyl diphosphate biosynthesis via DXP pathway; isopentenyl diphosphate from 1-deoxy-D-xylulose 5-phosphate: step 5/6. Converts 2C-methyl-D-erythritol 2,4-cyclodiphosphate (ME-2,4cPP) into 1-hydroxy-2-methyl-2-(E)-butenyl 4-diphosphate. The chain is 4-hydroxy-3-methylbut-2-en-1-yl diphosphate synthase (flavodoxin) from Thermus thermophilus (strain ATCC BAA-163 / DSM 7039 / HB27).